Here is a 147-residue protein sequence, read N- to C-terminus: Myoglobin (147 aa).

One can recognise a Globin domain in the interval 2 to 141; it reads ADFDAVLKCW…IIADLEANYK (140 aa). Residue H60 participates in nitrite binding. O2 is bound at residue H60. Residue H89 coordinates heme b.

It belongs to the globin family. Monomeric.

The protein localises to the cytoplasm. Its subcellular location is the sarcoplasm. The enzyme catalyses Fe(III)-heme b-[protein] + nitric oxide + H2O = Fe(II)-heme b-[protein] + nitrite + 2 H(+). It carries out the reaction H2O2 + AH2 = A + 2 H2O. Monomeric heme protein which primary function is to store oxygen and facilitate its diffusion within muscle tissues. Reversibly binds oxygen through a pentacoordinated heme iron and enables its timely and efficient release as needed during periods of heightened demand. Depending on the oxidative conditions of tissues and cells, and in addition to its ability to bind oxygen, it also has a nitrite reductase activity whereby it regulates the production of bioactive nitric oxide. Under stress conditions, like hypoxia and anoxia, it also protects cells against reactive oxygen species thanks to its pseudoperoxidase activity. In Thunnus alalunga (Albacore), this protein is Myoglobin (mb).